The sequence spans 348 residues: L-seryl-tRNA(Sec) kinase (348 aa).

25–32 (GLPAAGKS) lines the ATP pocket.

Belongs to the L-seryl-tRNA(Sec) kinase family. Mg(2+) serves as cofactor.

The enzyme catalyses L-seryl-tRNA(Sec) + ATP = O-phospho-L-seryl-tRNA(Sec) + ADP. It functions in the pathway aminoacyl-tRNA biosynthesis; selenocysteinyl-tRNA(Sec) biosynthesis; selenocysteinyl-tRNA(Sec) from L-seryl-tRNA(Sec) (archaeal/eukaryal route): step 1/2. Specifically phosphorylates seryl-tRNA(Sec) to O-phosphoseryl-tRNA(Sec), an activated intermediate for selenocysteine biosynthesis. The polypeptide is L-seryl-tRNA(Sec) kinase (PSTK) (Homo sapiens (Human)).